Here is a 146-residue protein sequence, read N- to C-terminus: Multiple coagulation factor deficiency protein 2 (146 aa).

An N-terminal signal peptide occupies residues 1 to 26 (MTMRSLLRTPFLCGLLWAFCAPGARA). Residues 68–103 (SPQELQLHYFKMHDYDGNNLLDGLELSTAITHVHKE) form the EF-hand 1 domain. 4 residues coordinate Ca(2+): D81, D83, N85, and E92. S106 is subject to Phosphoserine. An EF-hand 2 domain is found at 116–146 (ELINIIDGVLRDDDKNNDGYIDYAEFAKSLQ). Ca(2+) contacts are provided by D129, N131, D133, Y135, and E140.

Interacts in a calcium-dependent manner with LMAN1.

The protein resides in the endoplasmic reticulum-Golgi intermediate compartment. It is found in the endoplasmic reticulum. Its subcellular location is the golgi apparatus. The MCFD2-LMAN1 complex forms a specific cargo receptor for the ER-to-Golgi transport of selected proteins. Plays a role in the secretion of coagulation factors. The protein is Multiple coagulation factor deficiency protein 2 (MCFD2) of Homo sapiens (Human).